The chain runs to 337 residues: Serpentine receptor class delta-50 (337 aa).

The next 7 helical transmembrane spans lie at 10 to 30 (VLILTIFYNAYFLLAISSQLL), 48 to 68 (IYLFNILGLQFISTFSAFVLQ), 107 to 127 (VLFHILQTSLIACATALIIAF), 147 to 167 (QLVISYCVPLVFLICEVLSPN), 202 to 222 (SSQTLMLMIGLYGTPFIALVF), 250 to 270 (GLTLQTLLPLICYCPGFTYYI), and 280 to 300 (LFVEFAVSPYGFVYTIFDPLL).

It belongs to the nematode receptor-like protein srd family.

It is found in the membrane. This is Serpentine receptor class delta-50 from Caenorhabditis elegans.